A 359-amino-acid chain; its full sequence is 3-dehydroquinate synthase (359 aa).

Residues Gly-105–Asp-109, Thr-129–Thr-130, Lys-142, Lys-151, and Thr-169–Thr-172 each bind NAD(+). Zn(2+)-binding residues include Glu-184, His-247, and His-263.

The protein belongs to the sugar phosphate cyclases superfamily. Dehydroquinate synthase family. Co(2+) serves as cofactor. It depends on Zn(2+) as a cofactor. Requires NAD(+) as cofactor.

It localises to the cytoplasm. The enzyme catalyses 7-phospho-2-dehydro-3-deoxy-D-arabino-heptonate = 3-dehydroquinate + phosphate. The protein operates within metabolic intermediate biosynthesis; chorismate biosynthesis; chorismate from D-erythrose 4-phosphate and phosphoenolpyruvate: step 2/7. Catalyzes the conversion of 3-deoxy-D-arabino-heptulosonate 7-phosphate (DAHP) to dehydroquinate (DHQ). This chain is 3-dehydroquinate synthase, found in Ruminiclostridium cellulolyticum (strain ATCC 35319 / DSM 5812 / JCM 6584 / H10) (Clostridium cellulolyticum).